A 190-amino-acid polypeptide reads, in one-letter code: Large ribosomal subunit protein bL17 (190 aa).

The segment at K128–A190 is disordered. Over residues A143–T154 the composition is skewed to low complexity. Positions L179–A190 are enriched in acidic residues.

This sequence belongs to the bacterial ribosomal protein bL17 family. As to quaternary structure, part of the 50S ribosomal subunit. Contacts protein L32.

This is Large ribosomal subunit protein bL17 from Salinispora tropica (strain ATCC BAA-916 / DSM 44818 / JCM 13857 / NBRC 105044 / CNB-440).